The following is a 399-amino-acid chain: Argininosuccinate synthase (399 aa).

Residue 9–17 coordinates ATP; it reads AYSGGLDTS. Y87 is a binding site for L-citrulline. G117 is a binding site for ATP. The L-aspartate site is built by T119, N123, and D124. N123 is a binding site for L-citrulline. Positions 127, 176, 185, 261, and 273 each coordinate L-citrulline.

The protein belongs to the argininosuccinate synthase family. Type 1 subfamily. As to quaternary structure, homotetramer.

It is found in the cytoplasm. It catalyses the reaction L-citrulline + L-aspartate + ATP = 2-(N(omega)-L-arginino)succinate + AMP + diphosphate + H(+). It functions in the pathway amino-acid biosynthesis; L-arginine biosynthesis; L-arginine from L-ornithine and carbamoyl phosphate: step 2/3. This chain is Argininosuccinate synthase, found in Chlorobium chlorochromatii (strain CaD3).